Consider the following 216-residue polypeptide: MOB kinase activator-like 1 homolog B (216 aa).

C79, C84, H161, and H166 together coordinate Zn(2+).

The protein belongs to the MOB1/phocein family.

The sequence is that of MOB kinase activator-like 1 homolog B (mobB) from Dictyostelium discoideum (Social amoeba).